Here is a 192-residue protein sequence, read N- to C-terminus: Imidazole glycerol phosphate synthase subunit HisH (192 aa).

Residues 1 to 192 form the Glutamine amidotransferase type-1 domain; the sequence is MIVIVDYGLG…QAIQGGFIND (192 aa). Cys-77 acts as the Nucleophile in catalysis. Residues His-169 and Glu-171 contribute to the active site.

As to quaternary structure, heterodimer of HisH and HisF.

It localises to the cytoplasm. It carries out the reaction 5-[(5-phospho-1-deoxy-D-ribulos-1-ylimino)methylamino]-1-(5-phospho-beta-D-ribosyl)imidazole-4-carboxamide + L-glutamine = D-erythro-1-(imidazol-4-yl)glycerol 3-phosphate + 5-amino-1-(5-phospho-beta-D-ribosyl)imidazole-4-carboxamide + L-glutamate + H(+). The catalysed reaction is L-glutamine + H2O = L-glutamate + NH4(+). Its pathway is amino-acid biosynthesis; L-histidine biosynthesis; L-histidine from 5-phospho-alpha-D-ribose 1-diphosphate: step 5/9. Functionally, IGPS catalyzes the conversion of PRFAR and glutamine to IGP, AICAR and glutamate. The HisH subunit catalyzes the hydrolysis of glutamine to glutamate and ammonia as part of the synthesis of IGP and AICAR. The resulting ammonia molecule is channeled to the active site of HisF. The polypeptide is Imidazole glycerol phosphate synthase subunit HisH (Staphylococcus aureus (strain COL)).